A 368-amino-acid polypeptide reads, in one-letter code: Biglycan (368 aa).

The N-terminal stretch at 1-16 (MKVLLLLCSCILVIHA) is a signal peptide. Residues 17–37 (LPFEQRGFWDFSMDDGMAMMK) constitute a propeptide that is removed on maturation. Cystine bridges form between cysteine 63-cysteine 69 and cysteine 67-cysteine 76. LRR repeat units follow at residues 82–102 (TSIPKNLPKDTTLLDLQNNKI), 103–126 (TEIKKDDFKGLTNLYALVIVNNKI), 127–150 (SKINEKAFEPLQKMQKLYISKNNL), 151–171 (EEIPKNLPKSLVELRIHENKI), 172–195 (KKVPKGVFSGLKNMNCIEMGGNPL), 196–220 (ENGGIEAGAFDGLKLNYLRVSEAKL), 221–241 (SGIPKGLPSTLNELHLDNNKI), 242–265 (QAIEKEDLSQYASLYRLGLGHNNI), 266–289 (RMIENGSLSFMPVLRELHLDNNKL), 290–312 (SKVPPGLPDMKLLQVVYLHSNNI), 313–342 (TQVGVNDFCPIGFGVKRAYYNGISLFNNPV), and 343–368 (PYWEVQPATFRCVTDRLAIQFGNYRK). Residues asparagine 270 and asparagine 311 are each glycosylated (N-linked (GlcNAc...) asparagine). A disulfide bridge connects residues cysteine 321 and cysteine 354.

The protein belongs to the small leucine-rich proteoglycan (SLRP) family. SLRP class I subfamily.

It is found in the secreted. It localises to the extracellular space. The protein localises to the extracellular matrix. In terms of biological role, may be involved in collagen fiber assembly. The sequence is that of Biglycan (bgn) from Xenopus laevis (African clawed frog).